The primary structure comprises 225 residues: Enolase-phosphatase E1 (225 aa).

This sequence belongs to the HAD-like hydrolase superfamily. MasA/MtnC family. As to quaternary structure, monomer. Mg(2+) serves as cofactor.

The catalysed reaction is 5-methylsulfanyl-2,3-dioxopentyl phosphate + H2O = 1,2-dihydroxy-5-(methylsulfanyl)pent-1-en-3-one + phosphate. Its pathway is amino-acid biosynthesis; L-methionine biosynthesis via salvage pathway; L-methionine from S-methyl-5-thio-alpha-D-ribose 1-phosphate: step 3/6. It functions in the pathway amino-acid biosynthesis; L-methionine biosynthesis via salvage pathway; L-methionine from S-methyl-5-thio-alpha-D-ribose 1-phosphate: step 4/6. Its function is as follows. Bifunctional enzyme that catalyzes the enolization of 2,3-diketo-5-methylthiopentyl-1-phosphate (DK-MTP-1-P) into the intermediate 2-hydroxy-3-keto-5-methylthiopentenyl-1-phosphate (HK-MTPenyl-1-P), which is then dephosphorylated to form the acireductone 1,2-dihydroxy-3-keto-5-methylthiopentene (DHK-MTPene). This chain is Enolase-phosphatase E1, found in Shewanella piezotolerans (strain WP3 / JCM 13877).